The primary structure comprises 60 residues: Large ribosomal subunit protein bL32 (60 aa).

Belongs to the bacterial ribosomal protein bL32 family.

The chain is Large ribosomal subunit protein bL32 from Geobacter sulfurreducens (strain ATCC 51573 / DSM 12127 / PCA).